The chain runs to 787 residues: Serine proteinase stubble (787 aa).

Residues 1-22 (MKQPTLIRPRLRHRRSTPAAAT) form a disordered region. The Cytoplasmic portion of the chain corresponds to 1–58 (MKQPTLIRPRLRHRRSTPAAATKMCPKRHWLVNNRAAGSRGSGGAAARSRRSLDQIVE). A helical; Signal-anchor for type II membrane protein membrane pass occupies residues 59–80 (VLVALIVVNCLATAAAALITPP). Residues 81–787 (DSLESLGSLG…FTPWILEHVR (707 aa)) lie on the Extracellular side of the membrane. Asparagine 177 carries an N-linked (GlcNAc...) asparagine glycan. Residues 225–516 (AGTLVIRPSG…EISDSSIPDA (292 aa)) form a disordered region. Low complexity-rich tracts occupy residues 262–280 (SASHPSSSSSSSSSSNPNS), 287–303 (QQQQQQQHQQNQQNHWQ), 358–368 (PSTSTSTTSTS), 393–438 (SLAA…RTTT), and 449–485 (TTATSSSSTSTTSSKTPTTTRPISSSSSSSSGIVTSS). Residues 502 to 512 (GIETNEISDSS) show a composition bias toward polar residues. 2 disulfide bridges follow: cysteine 532/cysteine 660 and cysteine 575/cysteine 591. In terms of domain architecture, Peptidase S1 spans 544–787 (IVGGKSAAFG…FTPWILEHVR (244 aa)). Residues histidine 590 and aspartate 640 each act as charge relay system in the active site. An N-linked (GlcNAc...) asparagine glycan is attached at asparagine 672. Disulfide bonds link cysteine 704–cysteine 723 and cysteine 734–cysteine 763. Serine 738 acts as the Charge relay system in catalysis.

The protein belongs to the peptidase S1 family. May activate itself by proteolytic cleavage.

The protein resides in the membrane. In terms of biological role, hormone dependent protease required for epithelial morphogenesis, including the formation of bristles, legs, and wings. Has a dual function, detaches imaginal disk cells from extracellular matrices through its extracellular proteolytic domain and transmits an outside-to-inside signal to its intracellular domain to modify the cytoskeleton during morphogenesis. This Drosophila melanogaster (Fruit fly) protein is Serine proteinase stubble (Sb).